We begin with the raw amino-acid sequence, 124 residues long: Large ribosomal subunit protein bL12 (124 aa).

Belongs to the bacterial ribosomal protein bL12 family. In terms of assembly, homodimer. Part of the ribosomal stalk of the 50S ribosomal subunit. Forms a multimeric L10(L12)X complex, where L10 forms an elongated spine to which 2 to 4 L12 dimers bind in a sequential fashion. Binds GTP-bound translation factors.

Its function is as follows. Forms part of the ribosomal stalk which helps the ribosome interact with GTP-bound translation factors. Is thus essential for accurate translation. In Allorhizobium ampelinum (strain ATCC BAA-846 / DSM 112012 / S4) (Agrobacterium vitis (strain S4)), this protein is Large ribosomal subunit protein bL12.